We begin with the raw amino-acid sequence, 632 residues long: tRNA uridine 5-carboxymethylaminomethyl modification enzyme MnmG (632 aa).

FAD is bound by residues 15–20 (GAGHAG), Ile-127, and Ser-182. 276-290 (GPRYCPSIEDKIVRF) contacts NAD(+). Gln-373 lines the FAD pocket.

This sequence belongs to the MnmG family. Homodimer. Heterotetramer of two MnmE and two MnmG subunits. It depends on FAD as a cofactor.

It localises to the cytoplasm. Its function is as follows. NAD-binding protein involved in the addition of a carboxymethylaminomethyl (cmnm) group at the wobble position (U34) of certain tRNAs, forming tRNA-cmnm(5)s(2)U34. This Streptococcus pyogenes serotype M3 (strain SSI-1) protein is tRNA uridine 5-carboxymethylaminomethyl modification enzyme MnmG.